A 239-amino-acid chain; its full sequence is Ribosomal RNA small subunit methyltransferase G (239 aa).

S-adenosyl-L-methionine contacts are provided by residues glycine 95, leucine 100, 118–120, 146–147, and arginine 164; these read EAT and AE.

It belongs to the methyltransferase superfamily. RNA methyltransferase RsmG family.

Its subcellular location is the cytoplasm. It catalyses the reaction guanosine(527) in 16S rRNA + S-adenosyl-L-methionine = N(7)-methylguanosine(527) in 16S rRNA + S-adenosyl-L-homocysteine. Functionally, specifically methylates the N7 position of guanine in position 527 of 16S rRNA. This is Ribosomal RNA small subunit methyltransferase G from Sorangium cellulosum (strain So ce56) (Polyangium cellulosum (strain So ce56)).